We begin with the raw amino-acid sequence, 329 residues long: Biotin--protein ligase 2 (329 aa).

The 185-residue stretch at 67–251 folds into the BPL/LPL catalytic domain; the sequence is ISTHRFGRFL…KFENFFDLFM (185 aa). Residues 84–85, Q107, 111–113, and K182 each bind biotin; these read ST and RGR.

It belongs to the biotin--protein ligase family. In terms of tissue distribution, highly expressed in seeds. Expressed in roots, leaves, stems, flowers and siliques.

Its subcellular location is the cytoplasm. Seems to have no or limited implication in biotin-dependent carboxylase biotinylation in planta. The chain is Biotin--protein ligase 2 (HCS2) from Arabidopsis thaliana (Mouse-ear cress).